Here is a 277-residue protein sequence, read N- to C-terminus: Ras suppressor protein 1 (277 aa).

The disordered stretch occupies residues 1–24 (MSKSLKKLVEESREKNQPEVDMSD). The residue at position 2 (Ser2) is an N-acetylserine. Over residues 7 to 24 (KLVEESREKNQPEVDMSD) the composition is skewed to basic and acidic residues. LRR repeat units follow at residues 41–63 (HITQLVLSHNKLTMVPPNIAELK), 64–85 (NLEVLNFFNNQIEELPTQISSL), 87–109 (KLKHLNLGMNRLNTLPRGFGSLP), 110–133 (ALEVLDLTYNNLSENSLPGNFFYL), 135–156 (TLRALYLSDNDFEILPPDIGKL), 158–179 (KLQILSLRDNDLISLPKEIGEL), and 181–202 (QLKELHIQGNRLTVLPPELGNL). The interval 250–277 (MQANPEPPKKNNDKSKKISRKPLAAKNR) is disordered. Residues 256 to 265 (PPKKNNDKSK) are compositionally biased toward basic and acidic residues.

Its function is as follows. Potentially plays a role in the Ras signal transduction pathway. Capable of suppressing v-Ras transformation in vitro. This chain is Ras suppressor protein 1 (RSU1), found in Homo sapiens (Human).